The primary structure comprises 146 residues: Large-conductance mechanosensitive channel (146 aa).

2 helical membrane-spanning segments follow: residues 12 to 32 (AFAMRGNVIDMAVGVIIGGAF) and 83 to 103 (GNFLQATFDFIIIAFSIFLFI).

The protein belongs to the MscL family. As to quaternary structure, homopentamer.

The protein localises to the cell inner membrane. Functionally, channel that opens in response to stretch forces in the membrane lipid bilayer. May participate in the regulation of osmotic pressure changes within the cell. This Phocaeicola vulgatus (strain ATCC 8482 / DSM 1447 / JCM 5826 / CCUG 4940 / NBRC 14291 / NCTC 11154) (Bacteroides vulgatus) protein is Large-conductance mechanosensitive channel.